Here is a 2604-residue protein sequence, read N- to C-terminus: Probable polyketide synthase 17 (2604 aa).

Residues 11–433 (NDDIAIIGMG…GSNCHMILSE (423 aa)) form the Ketosynthase family 3 (KS3) domain. Residues Cys-179, His-316, and His-356 each act as for beta-ketoacyl synthase activity in the active site. The tract at residues 631–664 (GISPSIVVGHSFGEIPSALFSDVISLETAVKIVY) is acyl/malonyl transferases. Ser-641 (for acyl/malonyl transferase activity) is an active-site residue. An N-terminal hotdog fold region spans residues 937 to 1057 (NNLLGHDQFA…GRIGLFKHNP (121 aa)). The PKS/mFAS DH domain occupies 937–1216 (NNLLGHDQFA…CTSLIRLKKQ (280 aa)). Catalysis depends on His-968, which acts as the Proton acceptor; for dehydratase activity. Residues 1072–1216 (SFTTLTKSEV…CTSLIRLKKQ (145 aa)) form a C-terminal hotdog fold region. Asp-1132 functions as the Proton donor; for dehydratase activity in the catalytic mechanism. A disordered region spans residues 1357–1407 (GESEHFSPSNPSSPNDTPRNNSNNCSSKNNAASSDDADDDTNNEETINQLN). Residues 1363-1390 (SPSNPSSPNDTPRNNSNNCSSKNNAASS) are compositionally biased toward low complexity. In terms of domain architecture, Carrier spans 2507–2584 (GDSGSTQAKV…SIIQRISSKS (78 aa)). O-(pantetheine 4'-phosphoryl)serine is present on Ser-2544. Positions 2581 to 2597 (SSKSTSTSTPNPTNTSK) are enriched in low complexity. The segment at 2581–2604 (SSKSTSTSTPNPTNTSKQTATKKT) is disordered.

It depends on pantetheine 4'-phosphate as a cofactor.

In terms of biological role, probable polyketide synthase. This chain is Probable polyketide synthase 17 (pks17), found in Dictyostelium discoideum (Social amoeba).